Here is a 477-residue protein sequence, read N- to C-terminus: Probable cytosolic Fe-S cluster assembly factor GM20417 (477 aa).

The [4Fe-4S] cluster site is built by cysteine 23, cysteine 68, cysteine 71, cysteine 74, cysteine 187, cysteine 243, cysteine 395, and cysteine 399.

This sequence belongs to the NARF family.

Its function is as follows. Component of the cytosolic iron-sulfur (Fe/S) protein assembly machinery. Required for maturation of extramitochondrial Fe/S proteins. The polypeptide is Probable cytosolic Fe-S cluster assembly factor GM20417 (Drosophila sechellia (Fruit fly)).